The chain runs to 355 residues: Probable NADPH-dependent quinone reductase tdiC (355 aa).

Belongs to the zinc-containing alcohol dehydrogenase family. Requires NADPH as cofactor.

It functions in the pathway secondary metabolite biosynthesis. In terms of biological role, probable NADPH-dependent quinone reductase; part of the gene cluster that mediates the biosynthesis of terrequinone A, an antitumor agent. The first step in the biosynthetic pathway for terrequinone A is formation of indole pyruvic acid (IPA) from L-tryptophan by the aminotransferase tdiD. The nonribosomal peptide synthase tdiA then immediately converts unstable IPA to didemethylasterriquinone D (DDAQ D), via condensation of 2 IPA molecules. The symmetric connectivity of the 2 IPA molecules is thought to arise by head-to-tail dual Claisen condensations facilitated by the TE domain. TdiB then catalyzes reverse prenylation by transferring dimethylallyl diphosphate to carbon atom 2' of DDAQ D, to yield asterriquinone C-1. Finally, tdiC and tdiE enzymes robustly convert asterriquinone C-1 to terrequinone A via a transformation involving regular prenylation at carbon atom 5, which requires elimination of the hydroxy group on C-5. The chain is Probable NADPH-dependent quinone reductase tdiC from Emericella nidulans (strain FGSC A4 / ATCC 38163 / CBS 112.46 / NRRL 194 / M139) (Aspergillus nidulans).